Reading from the N-terminus, the 634-residue chain is Threonine--tRNA ligase (634 aa).

The 61-residue stretch at 1 to 61 (MINIRFPDGS…NSNCELRLIT (61 aa)) folds into the TGS domain. The tract at residues 241-532 (DHRKIGKVLD…LIEHYAGNLP (292 aa)) is catalytic. Cys332, His383, and His509 together coordinate Zn(2+).

Belongs to the class-II aminoacyl-tRNA synthetase family. In terms of assembly, homodimer. Zn(2+) serves as cofactor.

It is found in the cytoplasm. The enzyme catalyses tRNA(Thr) + L-threonine + ATP = L-threonyl-tRNA(Thr) + AMP + diphosphate + H(+). Catalyzes the attachment of threonine to tRNA(Thr) in a two-step reaction: L-threonine is first activated by ATP to form Thr-AMP and then transferred to the acceptor end of tRNA(Thr). Also edits incorrectly charged L-seryl-tRNA(Thr). In Francisella tularensis subsp. holarctica (strain OSU18), this protein is Threonine--tRNA ligase.